The sequence spans 533 residues: Beta-xylosidase (533 aa).

D14 acts as the Proton acceptor in catalysis. E186 functions as the Proton donor in the catalytic mechanism.

Belongs to the glycosyl hydrolase 43 family. In terms of assembly, homodimer.

The protein localises to the cell membrane. The catalysed reaction is Hydrolysis of (1-&gt;4)-beta-D-xylans, to remove successive D-xylose residues from the non-reducing termini.. This is Beta-xylosidase (xynB) from Bacillus subtilis (strain 168).